We begin with the raw amino-acid sequence, 216 residues long: Uridine kinase (216 aa).

16–23 (GASASGKS) provides a ligand contact to ATP.

Belongs to the uridine kinase family.

It localises to the cytoplasm. It catalyses the reaction uridine + ATP = UMP + ADP + H(+). The catalysed reaction is cytidine + ATP = CMP + ADP + H(+). It participates in pyrimidine metabolism; CTP biosynthesis via salvage pathway; CTP from cytidine: step 1/3. It functions in the pathway pyrimidine metabolism; UMP biosynthesis via salvage pathway; UMP from uridine: step 1/1. This chain is Uridine kinase, found in Mannheimia succiniciproducens (strain KCTC 0769BP / MBEL55E).